The following is a 294-amino-acid chain: ATP synthase gamma chain (294 aa).

Belongs to the ATPase gamma chain family. In terms of assembly, F-type ATPases have 2 components, CF(1) - the catalytic core - and CF(0) - the membrane proton channel. CF(1) has five subunits: alpha(3), beta(3), gamma(1), delta(1), epsilon(1). CF(0) has three main subunits: a, b and c.

The protein localises to the cell inner membrane. In terms of biological role, produces ATP from ADP in the presence of a proton gradient across the membrane. The gamma chain is believed to be important in regulating ATPase activity and the flow of protons through the CF(0) complex. In Nitrosomonas eutropha (strain DSM 101675 / C91 / Nm57), this protein is ATP synthase gamma chain.